The chain runs to 162 residues: Ribosome maturation factor RimM (162 aa).

The PRC barrel domain occupies 86–160 (EGRYYYFALI…SIHVDPIPGL (75 aa)).

It belongs to the RimM family. As to quaternary structure, binds ribosomal protein uS19.

Its subcellular location is the cytoplasm. Functionally, an accessory protein needed during the final step in the assembly of 30S ribosomal subunit, possibly for assembly of the head region. Essential for efficient processing of 16S rRNA. May be needed both before and after RbfA during the maturation of 16S rRNA. It has affinity for free ribosomal 30S subunits but not for 70S ribosomes. The polypeptide is Ribosome maturation factor RimM (Thermus thermophilus (strain ATCC 27634 / DSM 579 / HB8)).